We begin with the raw amino-acid sequence, 230 residues long: Nicotinamide riboside kinase 2 (230 aa).

9-17 (GMTNGGKTT) is a binding site for ATP. Positions 16 and 35 each coordinate Mg(2+). Asp-35 (proton acceptor) is an active-site residue. Residues 35 to 38 (DDFF) and 54 to 55 (WD) contribute to the substrate site. An ATP-binding site is contributed by Arg-130. Residues Arg-131 and 136 to 137 (YT) each bind substrate. Residues 134–136 (RNY) and 174–176 (KSR) each bind ATP. Residues 191–230 (LLNRSQESAPSPARPARTQGPGRGCGHRTARPAASQQDSM) form a disordered region.

Belongs to the uridine kinase family. NRK subfamily. As to quaternary structure, monomer. Interacts with ITGB1 alone or when associated with alpha-7, but not with alpha-5. As to expression, predominantly expressed in skeletal muscle and, at a much lower level, in the heart (at protein level). No expression in brain, kidney, liver, lung, pancreas nor placenta.

The enzyme catalyses beta-nicotinamide D-riboside + ATP = beta-nicotinamide D-ribonucleotide + ADP + H(+). It catalyses the reaction beta-D-ribosylnicotinate + ATP = nicotinate beta-D-ribonucleotide + ADP + H(+). Its pathway is cofactor biosynthesis; NAD(+) biosynthesis. Catalyzes the phosphorylation of nicotinamide riboside (NR) and nicotinic acid riboside (NaR) to form nicotinamide mononucleotide (NMN) and nicotinic acid mononucleotide (NaMN). Reduces laminin matrix deposition and cell adhesion to laminin, but not to fibronectin. Involved in the regulation of PXN at the protein level and of PXN tyrosine phosphorylation. May play a role in the regulation of terminal myogenesis. The sequence is that of Nicotinamide riboside kinase 2 (NMRK2) from Homo sapiens (Human).